Consider the following 280-residue polypeptide: Diaminopimelate epimerase (280 aa).

Substrate is bound by residues Asn13 and Asn66. The active-site Proton donor is Cys75. Residues 76 to 77 (GN), Asn162, Asn195, and 213 to 214 (ER) contribute to the substrate site. Catalysis depends on Cys222, which acts as the Proton acceptor. 223 to 224 (GT) provides a ligand contact to substrate.

This sequence belongs to the diaminopimelate epimerase family. As to quaternary structure, homodimer.

The protein resides in the cytoplasm. It carries out the reaction (2S,6S)-2,6-diaminopimelate = meso-2,6-diaminopimelate. Its pathway is amino-acid biosynthesis; L-lysine biosynthesis via DAP pathway; DL-2,6-diaminopimelate from LL-2,6-diaminopimelate: step 1/1. In terms of biological role, catalyzes the stereoinversion of LL-2,6-diaminopimelate (L,L-DAP) to meso-diaminopimelate (meso-DAP), a precursor of L-lysine and an essential component of the bacterial peptidoglycan. This Synechococcus elongatus (strain ATCC 33912 / PCC 7942 / FACHB-805) (Anacystis nidulans R2) protein is Diaminopimelate epimerase.